The chain runs to 147 residues: uncharacterized protein (147 aa).

One can recognise an HTH marR-type domain in the interval 1 to 137 (MRDNTIGSLI…LYELMTKVHK (137 aa)). The segment at residues 53-76 (QMELAEKVTVTQGGISRMLTRLEK) is a DNA-binding region (H-T-H motif).

This is an uncharacterized protein from Bacillus cereus (strain ATCC 14579 / DSM 31 / CCUG 7414 / JCM 2152 / NBRC 15305 / NCIMB 9373 / NCTC 2599 / NRRL B-3711).